The primary structure comprises 78 residues: Large ribosomal subunit protein bL28 (78 aa).

It belongs to the bacterial ribosomal protein bL28 family.

The chain is Large ribosomal subunit protein bL28 from Prochlorococcus marinus (strain MIT 9312).